Consider the following 190-residue polypeptide: Threonylcarbamoyl-AMP synthase (190 aa).

The YrdC-like domain maps to Leu-7–Gly-190.

Belongs to the SUA5 family. TsaC subfamily.

It localises to the cytoplasm. It catalyses the reaction L-threonine + hydrogencarbonate + ATP = L-threonylcarbamoyladenylate + diphosphate + H2O. Functionally, required for the formation of a threonylcarbamoyl group on adenosine at position 37 (t(6)A37) in tRNAs that read codons beginning with adenine. Catalyzes the conversion of L-threonine, HCO(3)(-)/CO(2) and ATP to give threonylcarbamoyl-AMP (TC-AMP) as the acyladenylate intermediate, with the release of diphosphate. This chain is Threonylcarbamoyl-AMP synthase, found in Enterobacter sp. (strain 638).